The following is a 98-amino-acid chain: Co-chaperonin GroES 1 (98 aa).

The protein belongs to the GroES chaperonin family. In terms of assembly, heptamer of 7 subunits arranged in a ring. Interacts with the chaperonin GroEL.

The protein localises to the cytoplasm. Functionally, together with the chaperonin GroEL, plays an essential role in assisting protein folding. The GroEL-GroES system forms a nano-cage that allows encapsulation of the non-native substrate proteins and provides a physical environment optimized to promote and accelerate protein folding. GroES binds to the apical surface of the GroEL ring, thereby capping the opening of the GroEL channel. The chain is Co-chaperonin GroES 1 from Rhizobium meliloti (strain 1021) (Ensifer meliloti).